Consider the following 489-residue polypeptide: Ataxin-10 homolog (489 aa).

It belongs to the ataxin-10 family.

The protein localises to the cytoplasm. May play a role in the regulation of cytokinesis. The chain is Ataxin-10 homolog (CTR86) from Debaryomyces hansenii (strain ATCC 36239 / CBS 767 / BCRC 21394 / JCM 1990 / NBRC 0083 / IGC 2968) (Yeast).